The following is a 21-amino-acid chain: Alpha-fibrinogenase A1 (21 aa).

The protein belongs to the peptidase S1 family. Snake venom subfamily. In terms of assembly, monomer. In terms of tissue distribution, expressed by the venom gland.

The protein resides in the secreted. Its activity is regulated as follows. Inhibited by PMSF, bovine aprotinin (APR), and soybean trypsin inhibitor (STI). Is not inhibited by EDTA, beta-mercaptoethanol, and high temperature (85 degrees Celsius). Its function is as follows. Snake venom serine protease that completely cleaves fibrinogen Aalpha chain (FGA), partially cleaves Bbeta chain (FGB) and has no activity on gamma chain. Is more potent that A2 and A3 alpha-fibrinogenases. Very active within 5 minutes. The protein is Alpha-fibrinogenase A1 of Crotalus atrox (Western diamondback rattlesnake).